The primary structure comprises 413 residues: Aminopeptidase 2 (413 aa).

Glutamate 250, glutamate 316, glutamate 340, histidine 345, histidine 378, and aspartate 380 together coordinate a divalent metal cation.

It belongs to the peptidase M29 family. Homodimer. The cofactor is Co(2+). It depends on Zn(2+) as a cofactor. Requires Mg(2+) as cofactor.

In terms of biological role, broad specificity metal-dependent exopeptidase, releasing all N-terminal amino acids. This chain is Aminopeptidase 2, found in Geobacillus stearothermophilus (Bacillus stearothermophilus).